A 245-amino-acid chain; its full sequence is MICAFLRVVRHAEKLHGSLGRQLLLPHFVLTKACLKTQPLRWGLREQKKTVQPRTVLGFTQKTFWTQGPDPRKAKEDSSKQVSINRNQREETGVSTSQKVKEAGRDVTYLIVVLFGVSITGSLLYTIFKELFSSSSPNIIYGKALGKCRTHPEVISVFGEPVKGYGEMSRRGRRQHVSFTEYANNGLKRIRVKFYIEGSEPGKQGTVHAEVEENPRSGQFDFRYIFVDVAPKRSIVVEDNRFQQS.

Residues 1 to 18 (MICAFLRVVRHAEKLHGS) constitute a mitochondrion transit peptide. Residues 64-97 (FWTQGPDPRKAKEDSSKQVSINRNQREETGVSTS) are disordered. Over residues 70–79 (DPRKAKEDSS) the composition is skewed to basic and acidic residues. A helical membrane pass occupies residues 108 to 128 (TYLIVVLFGVSITGSLLYTIF).

It belongs to the TIM21 family. Component of the TIM23 complex. Component of the MITRAC (mitochondrial translation regulation assembly intermediate of cytochrome c oxidase complex) complex, the core components of this complex being COA3/MITRAC12 and COX14. Interacts with COA3 and MT-CO1/COX1.

The protein resides in the mitochondrion membrane. Functionally, participates in the translocation of transit peptide-containing proteins across the mitochondrial inner membrane. Also required for assembly of mitochondrial respiratory chain complex I and complex IV as component of the MITRAC (mitochondrial translation regulation assembly intermediate of cytochrome c oxidase complex) complex. Probably shuttles between the presequence translocase and respiratory-chain assembly intermediates in a process that promotes incorporation of early nuclear-encoded subunits into these complexes. This is Mitochondrial import inner membrane translocase subunit Tim21 (Timm21) from Rattus norvegicus (Rat).